The sequence spans 536 residues: Phosphoenolpyruvate carboxykinase (ATP) (536 aa).

Residues Arg61, Tyr195, and Lys201 each contribute to the substrate site. Residues Lys201, His220, and 236–244 (GLSGTGKTT) each bind ATP. Residues Lys201 and His220 each coordinate Mn(2+). Asp257 lines the Mn(2+) pocket. Positions 285, 322, and 447 each coordinate ATP. Residue Arg322 coordinates substrate.

This sequence belongs to the phosphoenolpyruvate carboxykinase (ATP) family. The cofactor is Mn(2+).

The protein resides in the cytoplasm. The enzyme catalyses oxaloacetate + ATP = phosphoenolpyruvate + ADP + CO2. It participates in carbohydrate biosynthesis; gluconeogenesis. Its function is as follows. Involved in the gluconeogenesis. Catalyzes the conversion of oxaloacetate (OAA) to phosphoenolpyruvate (PEP) through direct phosphoryl transfer between the nucleoside triphosphate and OAA. The chain is Phosphoenolpyruvate carboxykinase (ATP) from Rhizobium leguminosarum bv. trifolii (strain WSM2304).